The primary structure comprises 309 residues: MILTVTLNPAIDVSYPLDELKCDTVNRVVDVTKTPGGKGLNVSRVLNEFGETVKATGCVGGESGDFIINHLPDSILSRFYKISGDTRTCIAILHEGNQTEILEKGPMLSVDEIDGFTHHFKYLLNDVDVVTLSGSLPAGMPDDYYQKLIKIANLNGKKTVLDCSGNALEAVLKGDSKPTVIKPNLEELSQLLGKEMTKDFDALKEVLQDELFDGIEWIIVSLGADGVFAKHKDTFYNVDIPKIKIVSAVGSGDSTVAGIASGLANDEDDRALLTKANVLGMLNAQEKTTGHVNMANYDKLYQSIKVKEV.

Belongs to the carbohydrate kinase PfkB family. LacC subfamily.

The enzyme catalyses D-tagatofuranose 6-phosphate + ATP = D-tagatofuranose 1,6-bisphosphate + ADP + H(+). It functions in the pathway carbohydrate metabolism; D-tagatose 6-phosphate degradation; D-glyceraldehyde 3-phosphate and glycerone phosphate from D-tagatose 6-phosphate: step 1/2. In Streptococcus pyogenes serotype M1, this protein is Tagatose-6-phosphate kinase.